A 291-amino-acid polypeptide reads, in one-letter code: Nucleoid occlusion protein (291 aa).

A DNA-binding region (H-T-H motif) is located at residues 155 to 174; sequence EALAQRLGKGQSTVANKLRL.

This sequence belongs to the ParB family.

It localises to the cytoplasm. The protein localises to the nucleoid. Effects nucleoid occlusion by binding relatively nonspecifically to DNA and preventing the assembly of the division machinery in the vicinity of the nucleoid, especially under conditions that disturb the cell cycle. It helps to coordinate cell division and chromosome segregation by preventing the formation of the Z ring through the nucleoid, which would cause chromosome breakage. This is Nucleoid occlusion protein from Bacillus pumilus (strain SAFR-032).